The following is a 98-amino-acid chain: uncharacterized protein (98 aa).

The tract at residues 1–63 (MPRDKKLVHR…NGHSQPAIVA (63 aa)) is disordered. Acidic residues predominate over residues 14–29 (DVEDEDNDQREEEWSD). A compositionally biased stretch (polar residues) spans 48–57 (EPSSASNGHS).

This is an uncharacterized protein from Aedes vexans (Inland floodwater mosquito).